A 142-amino-acid chain; its full sequence is Putative transmembrane protein INAFM1 (142 aa).

A compositionally biased stretch (gly residues) spans 1–19 (MRGTSCVGGGAESPGGAGL). The disordered stretch occupies residues 1-22 (MRGTSCVGGGAESPGGAGLSEG). Residues 36–56 (YFLCVSLAAVLLAVYYGLIWV) form a helical membrane-spanning segment. Disordered regions lie at residues 61 to 83 (PAAP…PGVP) and 99 to 142 (VPGG…RRPG). The segment covering 64 to 83 (PAGPQPSAPSPPCAARPGVP) has biased composition (pro residues). Positions 99-111 (VPGGPRPQLQLPL) are enriched in low complexity. A compositionally biased stretch (basic and acidic residues) spans 117-142 (YSDPDRRPSRQTPRETPEAAEGRRPG).

The protein localises to the membrane. This chain is Putative transmembrane protein INAFM1, found in Homo sapiens (Human).